We begin with the raw amino-acid sequence, 326 residues long: tRNA N6-adenosine threonylcarbamoyltransferase (326 aa).

Positions 111 and 115 each coordinate Fe cation. Residues 134–138 (TVSGG), aspartate 167, glycine 180, aspartate 184, and asparagine 268 contribute to the substrate site. Position 293 (aspartate 293) interacts with Fe cation.

Belongs to the KAE1 / TsaD family. Fe(2+) is required as a cofactor.

The protein resides in the cytoplasm. It carries out the reaction L-threonylcarbamoyladenylate + adenosine(37) in tRNA = N(6)-L-threonylcarbamoyladenosine(37) in tRNA + AMP + H(+). Its function is as follows. Required for the formation of a threonylcarbamoyl group on adenosine at position 37 (t(6)A37) in tRNAs that read codons beginning with adenine. Is involved in the transfer of the threonylcarbamoyl moiety of threonylcarbamoyl-AMP (TC-AMP) to the N6 group of A37, together with TsaE and TsaB. TsaD likely plays a direct catalytic role in this reaction. This Dehalococcoides mccartyi (strain ATCC BAA-2100 / JCM 16839 / KCTC 5957 / BAV1) protein is tRNA N6-adenosine threonylcarbamoyltransferase.